A 1377-amino-acid polypeptide reads, in one-letter code: Pleckstrin homology-like domain family B member 1 (1377 aa).

A Phosphoserine modification is found at Ser51. The FHA domain occupies 64-125 (TVIGSAARDI…LTQGCMLCLG (62 aa)). Arg131 is modified (asymmetric dimethylarginine). The segment at 150–187 (RAPGPPYSPVPAESESLVNGNHTPQTATRGPSACASHS) is disordered. Over residues 165 to 178 (SLVNGNHTPQTATR) the composition is skewed to polar residues. Phosphoserine occurs at positions 192, 220, and 223. Disordered regions lie at residues 211–334 (AAGK…LTDS) and 370–535 (GALS…GSFS). Over residues 252 to 273 (SPAFSPLSSPASSGSCASHSPS) the composition is skewed to low complexity. The segment covering 288–303 (RSSSYHLALQPPQSRP) has biased composition (polar residues). Positions 309–322 (ESPRLSRKGGHERP) are enriched in basic and acidic residues. Residues Ser324, Ser334, Ser381, Ser404, Ser430, Ser443, Ser461, Ser470, Ser489, and Ser501 each carry the phosphoserine modification. The segment covering 456 to 473 (ELPPLSPSLSRRALSPLP) has biased composition (low complexity). The span at 481 to 491 (KLNREVAESPR) shows a compositional bias: basic and acidic residues. Arg512 carries the omega-N-methylarginine modification. Phosphoserine occurs at positions 518 and 520. Thr522 bears the Phosphothreonine mark. Phosphoserine is present on residues Ser533, Ser539, Ser551, Ser555, Ser563, Ser578, and Ser583. Residues 653 to 663 (PSRGLAGASGR) show a composition bias toward low complexity. 3 disordered regions span residues 653–707 (PSRG…APST), 936–1019 (TGPA…GSLP), and 1119–1138 (SMETSISTGGNSACSPDNMS). Basic and acidic residues predominate over residues 677 to 691 (ESMERSDEENLKEEC). Ser678 carries the phosphoserine modification. Residues 683–809 (DEENLKEECS…TETKLFEDLE (127 aa)) adopt a coiled-coil conformation. Residues Ser971 and Ser1017 each carry the phosphoserine modification. Over residues 971–992 (SPLPRTRSGPLPSSSGSSSSSS) the composition is skewed to low complexity. Residues 1009-1018 (LLTQNGTGSL) show a composition bias toward polar residues. Residues 1144 to 1208 (DMGKIEEMEK…ARRQQLVEKE (65 aa)) adopt a coiled-coil conformation. The region spanning 1256 to 1370 (SKVCRGYLVK…WMDVIVTGAE (115 aa)) is the PH domain.

This Homo sapiens (Human) protein is Pleckstrin homology-like domain family B member 1 (PHLDB1).